The following is a 269-amino-acid chain: Diadenylate cyclase (269 aa).

The DAC domain maps to 109 to 266 (RSGIYDLFAN…GGKMILEIDP (158 aa)).

This sequence belongs to the adenylate cyclase family. DacZ subfamily. The cofactor is Mn(2+).

It catalyses the reaction 2 ATP = 3',3'-c-di-AMP + 2 diphosphate. In terms of biological role, diadenylate cyclase that catalyzes the condensation of 2 ATP molecules into cyclic di-AMP (c-di-AMP). c-di-AMP is a second messenger for intracellular signal transduction involved in the control of important regulatory processes such as osmoregulation. Is essential for H.volcanii. Overexpression of DacZ leads to cell death, suggesting the need for tight regulation of c-di-AMP levels. Cannot use GTP as substrate. The chain is Diadenylate cyclase from Haloferax volcanii (strain ATCC 29605 / DSM 3757 / JCM 8879 / NBRC 14742 / NCIMB 2012 / VKM B-1768 / DS2) (Halobacterium volcanii).